The following is a 94-amino-acid chain: NADH-ubiquinone oxidoreductase 10.5 kDa subunit (94 aa).

It belongs to the complex I NDUFA2 subunit family. As to quaternary structure, complex I is composed of about 40 different subunits.

The protein resides in the mitochondrion inner membrane. Accessory subunit of the mitochondrial membrane respiratory chain NADH dehydrogenase (Complex I), that is believed not to be involved in catalysis. Complex I functions in the transfer of electrons from NADH to the respiratory chain. The immediate electron acceptor for the enzyme is believed to be ubiquinone. This Neurospora crassa (strain ATCC 24698 / 74-OR23-1A / CBS 708.71 / DSM 1257 / FGSC 987) protein is NADH-ubiquinone oxidoreductase 10.5 kDa subunit (nuo-10.5).